The sequence spans 197 residues: MTSLYLASGSPRRQELLAQLGVTFERIVTGIEEQRQPQESAQQYVVRLAREKAQAGVAQTAQDLPVLGADTIVILNGEVLEKPRDAEHAAQMLRKLSGQTHQVMTAVALADSQHILDCLVVTDVTFRTLTDEDIAGYVASGEPLDKAGAYGIQGLGGCFVRKINGSYHAVVGLPLVETYELLSNFNALREKRDKHDG.

Aspartate 70 serves as the catalytic Proton acceptor.

This sequence belongs to the Maf family. YhdE subfamily. A divalent metal cation is required as a cofactor.

The protein localises to the cytoplasm. The catalysed reaction is dTTP + H2O = dTMP + diphosphate + H(+). The enzyme catalyses UTP + H2O = UMP + diphosphate + H(+). Nucleoside triphosphate pyrophosphatase that hydrolyzes dTTP and UTP. May have a dual role in cell division arrest and in preventing the incorporation of modified nucleotides into cellular nucleic acids. The protein is dTTP/UTP pyrophosphatase (yceF2) of Shigella sonnei (strain Ss046).